The primary structure comprises 150 residues: CCAAT/enhancer-binding protein gamma (150 aa).

A Glycyl lysine isopeptide (Lys-Gly) (interchain with G-Cter in SUMO2) cross-link involves residue Lys3. Positions 27–94 (GLQQVPQLVP…QKAQDTLQRV (68 aa)) are disordered. Residues 28 to 37 (LQQVPQLVPA) are compositionally biased toward low complexity. Over residues 56–72 (SPMDRNSDEYRQRRERN) the composition is skewed to basic and acidic residues. Residues 62–125 (SDEYRQRRER…SVLKDLFLEH (64 aa)) form the bZIP domain. A basic motif region spans residues 66–93 (RQRRERNNMAVKKSRLKSKQKAQDTLQR). Residues 97–118 (LKEENERLEAKIKLLTKELSVL) form a leucine-zipper region.

Belongs to the bZIP family. C/EBP subfamily. Binds DNA as a dimer and can form stable heterodimers with CEBPA and CEBPB. Interacts with ZNF638; this interaction increases transcriptional activation.

Its subcellular location is the nucleus. Its function is as follows. Transcription factor that binds to the promoter and the enhancer regions of target genes. Binds to the enhancer element PRE-I (positive regulatory element-I) of the IL-4 gene. Binds to the promoter and the enhancer of the immunoglobulin heavy chain. Binds to GPE1, a cis-acting element in the G-CSF gene promoter. The polypeptide is CCAAT/enhancer-binding protein gamma (CEBPG) (Homo sapiens (Human)).